A 218-amino-acid polypeptide reads, in one-letter code: DNA-directed RNA polymerase III subunit RPC7-like (218 aa).

The interval 130 to 218 (TIILPKRPPK…SDDNMDEAIY (89 aa)) is disordered. Positions 139 to 160 (KTTEDKEETIQKLETLEKKEEE) are enriched in basic and acidic residues. 2 stretches are compositionally biased toward acidic residues: residues 161 to 193 (VTSE…EETD) and 201 to 218 (NGED…EAIY).

The protein belongs to the eukaryotic RPC7 RNA polymerase subunit family. In terms of assembly, component of the RNA polymerase III (Pol III) complex consisting of 17 subunits. Pol III exists as two alternative complexes defined by the mutually exclusive incorporation of subunit POLR3G/RPC7alpha or POLR3GL/RPC7beta. Found in a trimeric complex with POLR3C/RPC3 and POLR3F/RPC6. Directly interacts with POLR3C.

It localises to the nucleus. Its function is as follows. DNA-dependent RNA polymerase catalyzes the transcription of DNA into RNA using the four ribonucleoside triphosphates as substrates. Specific peripheric component of RNA polymerase III which synthesizes small RNAs, such as 5S rRNA and tRNAs. The polypeptide is DNA-directed RNA polymerase III subunit RPC7-like (POLR3GL) (Bos taurus (Bovine)).